The sequence spans 130 residues: Small ribosomal subunit protein uS9 (130 aa).

Belongs to the universal ribosomal protein uS9 family.

The protein is Small ribosomal subunit protein uS9 of Azotobacter vinelandii (strain DJ / ATCC BAA-1303).